Consider the following 1710-residue polypeptide: Chromodomain-helicase-DNA-binding protein 1 (1710 aa).

Residues 1–10 (MNGHSDEESV) show a composition bias toward basic and acidic residues. Residues 1 to 252 (MNGHSDEESV…KEDEEMKTDS (252 aa)) are disordered. The span at 35–63 (SSGSSSDGSSSQSGSSDSDSGSESGSQSE) shows a compositional bias: low complexity. The segment covering 67–85 (DTSRENKVQAKPPKVDGAE) has biased composition (basic and acidic residues). Over residues 105 to 121 (QQQQQQQQQHQASSNSG) the composition is skewed to low complexity. Residues 122–136 (SEEDSSSSEDSDDSS) show a composition bias toward acidic residues. Residues 152–163 (SGSGSPSQSGSD) are compositionally biased toward low complexity. Basic residues predominate over residues 187-210 (KVKSRKPQNRSKSKNGKKILGQKK). A phosphoserine mark is found at Ser-215 and Ser-216. Acidic residues predominate over residues 215–226 (SSEEDDDEEDYD). Residue Thr-237 is modified to Phosphothreonine. Ser-241 is modified (phosphoserine). Phosphothreonine is present on Thr-250. Ser-252 carries the post-translational modification Phosphoserine. 2 Chromo domains span residues 272–364 (ETIE…RWLK) and 389–452 (QIVE…TPFK). Ser-471 bears the Phosphoserine mark. Residues 493–663 (AHSWCKGNSC…WSLLHFIMPE (171 aa)) form the Helicase ATP-binding domain. Residue 506-513 (DEMGLGKT) coordinates ATP. The short motif at 614–617 (DEAH) is the DEAH box element. The Helicase C-terminal domain occupies 792–943 (LLDKLLIRLR…HLVIQRMDTT (152 aa)). Phosphoserine is present on residues Ser-1025, Ser-1040, Ser-1081, Ser-1085, Ser-1096, Ser-1098, Ser-1100, and Ser-1102. Residues 1080 to 1120 (ISFNGSEGRRSRSRRYSGSDSDSISEGKRPKKRGRPRTIPR) are disordered. The segment covering 1108–1117 (RPKKRGRPRT) has biased composition (basic residues). Position 1161 is a phosphoserine (Ser-1161). Disordered stretches follow at residues 1321-1408 (EALS…ESEE) and 1502-1710 (KKRQ…SRKT). Over residues 1329–1345 (SKRRKARAKKNKAMKSI) the composition is skewed to basic residues. Residues Ser-1353, Ser-1355, Ser-1356, Ser-1360, Ser-1363, Ser-1371, and Ser-1373 each carry the phosphoserine modification. A compositionally biased stretch (basic and acidic residues) spans 1370–1379 (LSESKSDGRE). The tract at residues 1409–1511 (LDQKTFSICK…KKRQESQQNS (103 aa)) is CHD1 helical C-terminal domain (CHCT). Low complexity predominate over residues 1507-1516 (SQQNSDQNSN). 2 stretches are compositionally biased toward basic and acidic residues: residues 1523-1573 (RNPD…DSRK) and 1582-1670 (GKDH…DHRA). A Phosphoserine modification is found at Ser-1622. Repeat copies occupy residues 1628-1632 (HSDHR), 1634-1638 (HSDHR), and 1640-1644 (HSDHR). Positions 1628-1644 (HSDHRSHSDHRLHSDHR) are 3 X 5 AA repeats of H-S-D-H-R. Phosphoserine occurs at positions 1677, 1688, and 1689. The span at 1690 to 1701 (PFEHSVEHKSTP) shows a compositional bias: basic and acidic residues.

It belongs to the SNF2/RAD54 helicase family. In terms of assembly, component of the SAGA complex. Interacts with BCLAF1, NCoR, SRP20 and SAFB. Specifically interacts with methylated H3K4me2 and H3K4me3. Interacts with the FACT complex, the PAF complex and the U2 snRNP. Interacts directly with PAF1, SFA3A1, SFA3A2, SFA3A3, SNF2 and SSRP1. Expressed in many tissues including in the brain, where the highest level of expression is found in the cerebellum and basal ganglia.

It is found in the nucleus. The protein localises to the cytoplasm. It catalyses the reaction ATP + H2O = ADP + phosphate + H(+). Its function is as follows. ATP-dependent chromatin-remodeling factor which functions as substrate recognition component of the transcription regulatory histone acetylation (HAT) complex SAGA. Regulates polymerase II transcription. Also required for efficient transcription by RNA polymerase I, and more specifically the polymerase I transcription termination step. Regulates negatively DNA replication. Not only involved in transcription-related chromatin-remodeling, but also required to maintain a specific chromatin configuration across the genome. Is also associated with histone deacetylase (HDAC) activity. Required for the bridging of SNF2, the FACT complex, the PAF complex as well as the U2 snRNP complex to H3K4me3. Functions to modulate the efficiency of pre-mRNA splicing in part through physical bridging of spliceosomal components to H3K4me3. Required for maintaining open chromatin and pluripotency in embryonic stem cells. The polypeptide is Chromodomain-helicase-DNA-binding protein 1 (Homo sapiens (Human)).